Here is a 364-residue protein sequence, read N- to C-terminus: Protein-glutamate methylesterase/protein-glutamine glutaminase 3 (364 aa).

Positions 7–124 (RVLIVDDSAS…THALLEASAR (118 aa)) constitute a Response regulatory domain. Aspartate 58 is subject to 4-aspartylphosphate. Residues 167–358 (PTTERLVCIG…REIMLWQDAK (192 aa)) enclose the CheB-type methylesterase domain. Active-site residues include serine 178, histidine 204, and aspartate 300.

The protein belongs to the CheB family. Phosphorylated by CheA. Phosphorylation of the N-terminal regulatory domain activates the methylesterase activity.

It localises to the cytoplasm. The enzyme catalyses [protein]-L-glutamate 5-O-methyl ester + H2O = L-glutamyl-[protein] + methanol + H(+). It carries out the reaction L-glutaminyl-[protein] + H2O = L-glutamyl-[protein] + NH4(+). Its function is as follows. Involved in chemotaxis. Part of a chemotaxis signal transduction system that modulates chemotaxis in response to various stimuli. Catalyzes the demethylation of specific methylglutamate residues introduced into the chemoreceptors (methyl-accepting chemotaxis proteins or MCP) by CheR. Also mediates the irreversible deamidation of specific glutamine residues to glutamic acid. This Rhodopseudomonas palustris (strain BisB18) protein is Protein-glutamate methylesterase/protein-glutamine glutaminase 3.